The primary structure comprises 154 residues: Ribonuclease 1 (154 aa).

It belongs to the BetVI family.

The protein resides in the cytoplasm. Functionally, catalyzes the two-stage endonucleolytic cleavage to 3'-phosphomononucleotides and 3'-phosphooligonucleotides with 2',3'-cyclic phosphate intermediates. The protein is Ribonuclease 1 of Panax ginseng (Korean ginseng).